A 788-amino-acid chain; its full sequence is Ciliated left-right organizer metallopeptidase (788 aa).

The first 20 residues, 1–20, serve as a signal peptide directing secretion; the sequence is MLLLLLLLLLLPPLVLRVAA. At 21–735 the chain is on the extracellular side; sequence SRCLHDETQK…DHNPSMTHLR (715 aa). Residues 40–56 are compositionally biased toward low complexity; the sequence is SQLPSKSRSSSLTLPSS. Residues 40 to 59 are disordered; the sequence is SQLPSKSRSSSLTLPSSRDP. H305 lines the Zn(2+) pocket. E306 is a catalytic residue. Zn(2+) is bound at residue H309. N333 is a glycosylation site (N-linked (GlcNAc...) asparagine). H385 is a binding site for Zn(2+). N-linked (GlcNAc...) asparagine glycosylation is found at N425, N491, N524, and N713. Residues 736-756 form a helical membrane-spanning segment; that stretch reads LSMGLCLMLLILVGVMGTTAY. Topologically, residues 757-788 are cytoplasmic; sequence QKRATLPVRPSASYHSPELHSTRVPVRGIREV. A disordered region spans residues 767 to 788; that stretch reads SASYHSPELHSTRVPVRGIREV.

The protein belongs to the peptidase M8 family. Requires Zn(2+) as cofactor.

Its subcellular location is the membrane. Functionally, putative metalloproteinase that plays a role in left-right patterning process. This Homo sapiens (Human) protein is Ciliated left-right organizer metallopeptidase.